A 726-amino-acid chain; its full sequence is Catalase-peroxidase (726 aa).

Residues 85-208 (WHSAGSYRIH…FAATEMGLIY (124 aa)) constitute a cross-link (tryptophyl-tyrosyl-methioninium (Trp-Tyr) (with M-234)). His-86 functions as the Proton acceptor in the catalytic mechanism. The segment at residues 208–234 (YVNPEGPMGNPDPSGSAKEIRLAFTRM) is a cross-link (tryptophyl-tyrosyl-methioninium (Tyr-Met) (with W-85)). Heme b is bound at residue His-249.

The protein belongs to the peroxidase family. Peroxidase/catalase subfamily. As to quaternary structure, homodimer or homotetramer. It depends on heme b as a cofactor. In terms of processing, formation of the three residue Trp-Tyr-Met cross-link is important for the catalase, but not the peroxidase activity of the enzyme.

The catalysed reaction is H2O2 + AH2 = A + 2 H2O. The enzyme catalyses 2 H2O2 = O2 + 2 H2O. In terms of biological role, bifunctional enzyme with both catalase and broad-spectrum peroxidase activity. The sequence is that of Catalase-peroxidase from Pseudothermotoga lettingae (strain ATCC BAA-301 / DSM 14385 / NBRC 107922 / TMO) (Thermotoga lettingae).